We begin with the raw amino-acid sequence, 168 residues long: Group IIF secretory phospholipase A2 (168 aa).

An N-terminal signal peptide occupies residues 1 to 20 (MKKFFAIAVLAGSVVTTAHS). Disulfide bonds link Cys-46-Cys-138, Cys-48-Cys-64, Cys-63-Cys-120, Cys-69-Cys-145, Cys-70-Cys-113, Cys-79-Cys-106, and Cys-98-Cys-111. Ca(2+) is bound by residues Tyr-47, Gly-49, and Gly-51. The active site involves His-67. Residue Asp-68 participates in Ca(2+) binding. N-linked (GlcNAc...) asparagine glycosylation is found at Asn-92 and Asn-102. The active site involves Asp-114. The tract at residues 139-168 (QGPTPNCSIYDPYPEEVTCGHGLPATPVST) is required for localization on the plasma membrane. Asn-144 carries N-linked (GlcNAc...) asparagine glycosylation.

This sequence belongs to the phospholipase A2 family. Requires Ca(2+) as cofactor. In terms of tissue distribution, strongly expressed in testis.

Its subcellular location is the secreted. It is found in the cell membrane. It carries out the reaction a 1,2-diacyl-sn-glycero-3-phosphocholine + H2O = a 1-acyl-sn-glycero-3-phosphocholine + a fatty acid + H(+). The catalysed reaction is 1-hexadecanoyl-2-(9Z-octadecenoyl)-sn-glycero-3-phospho-(1'-sn-glycerol) + H2O = 1-hexadecanoyl-sn-glycero-3-phospho-(1'-sn-glycerol) + (9Z)-octadecenoate + H(+). The enzyme catalyses 1-hexadecanoyl-2-(9Z,12Z-octadecadienoyl)-sn-glycero-3-phosphoethanolamine + H2O = 1-hexadecanoyl-sn-glycero-3-phosphoethanolamine + (9Z,12Z)-octadecadienoate + H(+). It catalyses the reaction 1-hexadecanoyl-2-(5Z,8Z,11Z,14Z-eicosatetraenoyl)-sn-glycero-3-phosphoethanolamine + H2O = 1-hexadecanoyl-sn-glycero-3-phosphoethanolamine + (5Z,8Z,11Z,14Z)-eicosatetraenoate + H(+). It carries out the reaction 1-hexadecanoyl-2-(9Z-octadecenoyl)-sn-glycero-3-phosphocholine + H2O = 1-hexadecanoyl-sn-glycero-3-phosphocholine + (9Z)-octadecenoate + H(+). The catalysed reaction is 1-hexadecanoyl-2-(9Z-octadecenoyl)-sn-glycero-3-phospho-L-serine + H2O = 1-hexadecanoyl-sn-glycero-3-phospho-L-serine + (9Z)-octadecenoate + H(+). Functionally, secretory calcium-dependent phospholipase A2 that primarily targets extracellular phospholipids. Hydrolyzes the ester bond of the fatty acyl group attached at the sn-2 position of phospholipids (phospholipase A2 activity), the catalytic efficiency decreasing in the following order: phosphatidylglycerols &gt; phosphatidylethanolamines &gt; phosphatidylcholines &gt; phosphatidylserines. May play a role in lipid mediator production in inflammatory conditions, by providing arachidonic acid to downstream cyclooxygenases and lipoxygenases. This Mus musculus (Mouse) protein is Group IIF secretory phospholipase A2 (Pla2g2f).